Consider the following 642-residue polypeptide: Cysteine-rich receptor-like protein kinase 27 (642 aa).

Residues 1-24 form the signal peptide; sequence MASTSIMLSSFFSFFFLTFFVTYA. Over 25 to 274 the chain is Extracellular; it reads QQNVTVHTIC…QGKSKDRSKT (250 aa). N-linked (GlcNAc...) asparagine glycans are attached at residues Asn-27, Asn-40, Asn-44, Asn-70, Asn-145, Asn-173, and Asn-258. Gnk2-homologous domains are found at residues 29–130 and 136–240; these read TVHT…SRII and PVPF…VYPF. A helical membrane pass occupies residues 275–295; it reads LIFAVVPIVAIILGLVFLFIY. Residues 296-642 are Cytoplasmic-facing; that stretch reads LKRRRKKKTL…DVSLTDLSAR (347 aa). One can recognise a Protein kinase domain in the interval 333–620; it reads FSLTNKIGEG…QLPKPSQPGF (288 aa). ATP-binding positions include 339–347 and Lys-361; that span reads IGEGGFGVV. Tyr-406 is modified (phosphotyrosine). The active-site Proton acceptor is Asp-458. Ser-462 is subject to Phosphoserine. The residue at position 498 (Thr-498) is a Phosphothreonine. At Tyr-506 the chain carries Phosphotyrosine.

This sequence belongs to the protein kinase superfamily. Ser/Thr protein kinase family. CRK subfamily.

The protein localises to the membrane. The enzyme catalyses L-seryl-[protein] + ATP = O-phospho-L-seryl-[protein] + ADP + H(+). It catalyses the reaction L-threonyl-[protein] + ATP = O-phospho-L-threonyl-[protein] + ADP + H(+). This chain is Cysteine-rich receptor-like protein kinase 27 (CRK27), found in Arabidopsis thaliana (Mouse-ear cress).